Here is a 485-residue protein sequence, read N- to C-terminus: Serine/threonine-protein kinase 4 (485 aa).

The Protein kinase domain occupies 30 to 281 (FDVLEKLGEG…ATELLQHPFI (252 aa)). ATP-binding positions include 36–44 (LGEGSYGSV) and lysine 59. Aspartate 149 functions as the Proton acceptor in the catalytic mechanism. Threonine 183 is modified (phosphothreonine; by autocatalysis). A coiled-coil region spans residues 287-313 (ESILRHLINEAQDAKLKRTELKQREVE). The 48-residue stretch at 431 to 478 (YSFLKDWSVTELQLRLNSLDPMMEQEIEEIHHKYQAKRQPILEAIESK) folds into the SARAH domain.

The protein belongs to the protein kinase superfamily. STE Ser/Thr protein kinase family. STE20 subfamily. Homodimer; mediated via the coiled-coil region. The cofactor is Mg(2+). In terms of processing, autophosphorylated on Thr-183. Post-translationally, proteolytically cleaved by caspase-3 during apoptosis at Asp-326 resulting in a 37 kDa form. Proteolytic cleavage results in kinase activation and nuclear translocation of the truncated form (MST1/N).

Its subcellular location is the cytoplasm. It is found in the nucleus. The catalysed reaction is L-seryl-[protein] + ATP = O-phospho-L-seryl-[protein] + ADP + H(+). It catalyses the reaction L-threonyl-[protein] + ATP = O-phospho-L-threonyl-[protein] + ADP + H(+). The C-terminal non-catalytic region inhibits the kinase activity, the enzyme is activated by caspase-cleavage. Homodimerization and autophosphorylation of Thr-183 is also required for full activation. Its function is as follows. Stress-activated, pro-apoptotic kinase which, following caspase-cleavage, enters the nucleus and induces chromatin condensation followed by internucleosomal DNA fragmentation. Key component of the Hippo signaling pathway which plays a pivotal role in organ size control and tumor suppression by restricting proliferation and promoting apoptosis. The core of this pathway is composed of a kinase cascade wherein stk3/mst2 and stk4/mst1, in complex with its regulatory protein sav1, phosphorylates and activates lats1/2 in complex with its regulatory protein mob1, which in turn phosphorylates and inactivates yap1 oncoprotein and wwtr1/taz. Phosphorylation of yap1 by lats2 inhibits its translocation into the nucleus to regulate cellular genes important for cell proliferation, cell death, and cell migration. Phosphorylates 'Ser-14' of histone H2B (H2BS14ph) during apoptosis. This is Serine/threonine-protein kinase 4 (stk4) from Xenopus tropicalis (Western clawed frog).